The sequence spans 542 residues: Excitatory amino acid transporter 1 (542 aa).

Residues 1–47 (MTKSNGEEARLGGRMERFQQGVRKRTLLAKKKVQNITKEDVKSYLFR) are Cytoplasmic-facing. Residues 48–68 (NAFVLLTVTAVIVGTILGFTL) traverse the membrane as a helical segment. Residues 69–86 (RPYRMSYREVKYFSFPGE) lie on the Extracellular side of the membrane. Residues 87–108 (LLMRMLQMLVLPLIISSLVTGM) traverse the membrane as a helical segment. Residues 109-122 (AALDSKASGKMGMR) lie on the Cytoplasmic side of the membrane. The helical transmembrane segment at 123–145 (AVVYYMTTTIIAVVIGIIIVIII) threads the bilayer. Over 146–236 (HPGKGTKENM…ITEELVPVPG (91 aa)) the chain is Extracellular. The helical transmembrane segment at 237–260 (SVNGVNALGLVVFSMCFGFVIGNM) threads the bilayer. Topologically, residues 261–269 (KEQGQALRE) are cytoplasmic. Residues 270 to 297 (FFDSLNEAIMRLVAVIMWYAPLGILFLI) form a helical membrane-spanning segment. Over 298–318 (AGKIVEMEDMGVIGGQLAMYT) the chain is Extracellular. The helical transmembrane segment at 319–340 (VTVIVGLLIHAVIVLPLLYFLV) threads the bilayer. Over 341–345 (TRKNP) the chain is Cytoplasmic. Positions 346–376 (WVFIGGLLQALITALGTSSSSATLPITFKCL) form an intramembrane region, discontinuously helical. 363-365 (SSS) is an L-aspartate binding site. At 377–385 (EENNGVDKR) the chain is on the cytoplasmic side. Residues 386–412 (VTRFVLPVGATINMDGTALYEALAAIF) traverse the membrane as a helical segment. Gly394, Thr396, and Asn398 together coordinate Na(+). An L-aspartate-binding site is contributed by Thr402. The Extracellular segment spans residues 413 to 425 (IAQVNNFELNFGQ). Positions 426 to 459 (IITISITATAASIGAAGIPQAGLVTMVIVLTSVG) form an intramembrane region, discontinuously helical. An L-aspartate-binding site is contributed by 443-447 (IPQAG). Topologically, residues 460 to 472 (LPTDDITLIIAVD) are extracellular. A helical transmembrane segment spans residues 473–494 (WFLDRLRTTTNVLGDSLGAGIV). The L-aspartate site is built by Asp476 and Asn483. Residues Asn483 and Asp487 each contribute to the Na(+) site. Topologically, residues 495–542 (EHLSRHELKNRDVEMGNSVIEENEMKKPYQLISQESEIEKSMDSETKM) are cytoplasmic. Ser512 carries the phosphoserine modification.

The protein belongs to the dicarboxylate/amino acid:cation symporter (DAACS) (TC 2.A.23) family. SLC1A3 subfamily. In terms of assembly, homotrimer. Post-translationally, glycosylated.

Its subcellular location is the cell membrane. The catalysed reaction is K(+)(in) + L-glutamate(out) + 3 Na(+)(out) + H(+)(out) = K(+)(out) + L-glutamate(in) + 3 Na(+)(in) + H(+)(in). It catalyses the reaction K(+)(in) + L-aspartate(out) + 3 Na(+)(out) + H(+)(out) = K(+)(out) + L-aspartate(in) + 3 Na(+)(in) + H(+)(in). The enzyme catalyses D-aspartate(out) + K(+)(in) + 3 Na(+)(out) + H(+)(out) = D-aspartate(in) + K(+)(out) + 3 Na(+)(in) + H(+)(in). In terms of biological role, sodium-dependent, high-affinity amino acid transporter that mediates the uptake of L-glutamate and also L-aspartate and D-aspartate. Functions as a symporter that transports one amino acid molecule together with two or three Na(+) ions and one proton, in parallel with the counter-transport of one K(+) ion. Plays a redundant role in the rapid removal of released glutamate from the synaptic cleft, which is essential for terminating the postsynaptic action of glutamate. This is Excitatory amino acid transporter 1 (SLC1A3) from Bos taurus (Bovine).